The primary structure comprises 563 residues: Envelope glycoprotein (563 aa).

Residues Met1–Ala18 form the signal peptide. Topologically, residues Gly19–Gly503 are extracellular. N-linked (GlcNAc...) asparagine; by host glycosylation is found at Asn113, Asn219, and Asn229. The CXXC signature appears at Cys236–Cys239. 3 disulfide bridges follow: Cys236–Cys239, Cys236–Cys465, and Cys457–Cys464. N-linked (GlcNAc...) asparagine; by host glycosylation is found at Asn264, Asn282, Asn292, Asn306, Asn312, Asn321, and Asn339. The fusion peptide stretch occupies residues Phe380 to Leu400. Coiled coils occupy residues Gly401–Ala451 and Gln461–Leu497. The interval Leu440–Ile456 is immunosuppression. Positions Cys457–Cys465 match the CX6CC motif. A glycan (N-linked (GlcNAc...) asparagine; by host) is linked at Asn469. A helical transmembrane segment spans residues Leu504 to Ile524. At Gly525–Asp563 the chain is on the cytoplasmic side. Residue Cys527 is the site of S-palmitoyl cysteine; by host attachment. The short motif at Tyr552–Leu555 is the YXXL motif; contains endocytosis signal element.

In terms of assembly, the mature envelope protein (Env) consists of a trimer of SU-TM heterodimers attached by a labile interchain disulfide bond. In terms of processing, specific enzymatic cleavages in vivo yield mature proteins. Envelope glycoproteins are synthesized as an inactive precursor that is N-glycosylated and processed likely by host cell furin or by a furin-like protease in the Golgi to yield the mature SU and TM proteins. The cleavage site between SU and TM requires the minimal sequence [KR]-X-[KR]-R. The R-peptide is released from the C-terminus of the cytoplasmic tail of the TM protein upon particle formation as a result of proteolytic cleavage by the viral protease. Cleavage of this peptide is required for TM to become fusogenic. Post-translationally, the CXXC motif is highly conserved across a broad range of retroviral envelope proteins. It is thought to participate in the formation of a labile disulfide bond possibly with the CX6CC motif present in the transmembrane protein. Isomerization of the intersubunit disulfide bond to an SU intrachain disulfide bond is thought to occur upon receptor recognition in order to allow membrane fusion. The transmembrane protein is palmitoylated.

It localises to the virion membrane. The protein localises to the host cell membrane. In terms of biological role, the surface protein (SU) attaches the virus to the host cell by binding to its receptor. This interaction triggers the refolding of the transmembrane protein (TM) and is thought to activate its fusogenic potential by unmasking its fusion peptide. Fusion occurs at the host cell plasma membrane. Its function is as follows. The transmembrane protein (TM) acts as a class I viral fusion protein. Under the current model, the protein has at least 3 conformational states: pre-fusion native state, pre-hairpin intermediate state, and post-fusion hairpin state. During viral and target cell membrane fusion, the coiled coil regions (heptad repeats) assume a trimer-of-hairpins structure, positioning the fusion peptide in close proximity to the C-terminal region of the ectodomain. The formation of this structure appears to drive apposition and subsequent fusion of viral and target cell membranes. Membranes fusion leads to delivery of the nucleocapsid into the cytoplasm. This chain is Envelope glycoprotein (env), found in Baboon endogenous virus (strain M7).